Here is a 474-residue protein sequence, read N- to C-terminus: UDP glycosyltransferase 9 (474 aa).

UDP-alpha-D-glucose-binding positions include Ser296, 349-350 (WC), 367-375 (HCGWNSTLE), and 389-392 (WADQ).

Belongs to the UDP-glycosyltransferase family.

This chain is UDP glycosyltransferase 9, found in Catharanthus roseus (Madagascar periwinkle).